A 178-amino-acid chain; its full sequence is Large ribosomal subunit protein uL6 (178 aa).

It belongs to the universal ribosomal protein uL6 family. In terms of assembly, part of the 50S ribosomal subunit.

This protein binds to the 23S rRNA, and is important in its secondary structure. It is located near the subunit interface in the base of the L7/L12 stalk, and near the tRNA binding site of the peptidyltransferase center. This is Large ribosomal subunit protein uL6 from Maridesulfovibrio salexigens (strain ATCC 14822 / DSM 2638 / NCIMB 8403 / VKM B-1763) (Desulfovibrio salexigens).